A 463-amino-acid chain; its full sequence is Adenosylhomocysteinase (463 aa).

Residues T54, D128, and E189 each coordinate substrate. 190–192 (TTT) is an NAD(+) binding site. Substrate-binding residues include K219 and D223. Residues N224, 253–258 (GYGDVG), E276, N311, 332–334 (IGH), and N377 each bind NAD(+).

Belongs to the adenosylhomocysteinase family. As to quaternary structure, homotetramer. Requires NAD(+) as cofactor.

It localises to the cytoplasm. The enzyme catalyses S-adenosyl-L-homocysteine + H2O = L-homocysteine + adenosine. Its pathway is amino-acid biosynthesis; L-homocysteine biosynthesis; L-homocysteine from S-adenosyl-L-homocysteine: step 1/1. May play a key role in the regulation of the intracellular concentration of adenosylhomocysteine. The sequence is that of Adenosylhomocysteinase from Rhodobacter capsulatus (strain ATCC BAA-309 / NBRC 16581 / SB1003).